The sequence spans 206 residues: Sperm acrosome developmental regulator (206 aa).

Residues Arg180–Leu206 are disordered.

In terms of tissue distribution, expressed in sperm (at protein level).

It localises to the cytoplasmic vesicle. It is found in the secretory vesicle. The protein resides in the acrosome. Functionally, may play a role in acrosome formation and nucleus shaping during spermiogenesis. This Homo sapiens (Human) protein is Sperm acrosome developmental regulator.